The following is a 349-amino-acid chain: Protein-glutamate methylesterase/protein-glutamine glutaminase (349 aa).

Positions 2-118 (RVLVVDDSAL…VDLSSVAQEL (117 aa)) constitute a Response regulatory domain. Asp-52 carries the post-translational modification 4-aspartylphosphate. The region spanning 159-345 (VLIGSSTGGP…EEIVRFLEVK (187 aa)) is the CheB-type methylesterase domain. Active-site residues include Ser-164, His-191, and Asp-287.

Belongs to the CheB family. Post-translationally, phosphorylated by CheA. Phosphorylation of the N-terminal regulatory domain activates the methylesterase activity.

It localises to the cytoplasm. The enzyme catalyses [protein]-L-glutamate 5-O-methyl ester + H2O = L-glutamyl-[protein] + methanol + H(+). It catalyses the reaction L-glutaminyl-[protein] + H2O = L-glutamyl-[protein] + NH4(+). Its function is as follows. Involved in chemotaxis. Part of a chemotaxis signal transduction system that modulates chemotaxis in response to various stimuli. Catalyzes the demethylation of specific methylglutamate residues introduced into the chemoreceptors (methyl-accepting chemotaxis proteins or MCP) by CheR. Also mediates the irreversible deamidation of specific glutamine residues to glutamic acid. The polypeptide is Protein-glutamate methylesterase/protein-glutamine glutaminase (Archaeoglobus fulgidus (strain ATCC 49558 / DSM 4304 / JCM 9628 / NBRC 100126 / VC-16)).